Here is a 1011-residue protein sequence, read N- to C-terminus: Protein argonaute 1C (1011 aa).

The span at 1-11 shows a compositional bias: basic residues; that stretch reads MASRRPTHRHH. Disordered regions lie at residues 1 to 95 and 107 to 147; these read MASR…SPLA and RPSE…PLRP. Low complexity-rich tracts occupy residues 28–53 and 61–92; these read ARYA…ARGA and QQQQ…ASSS. Over residues 127 to 140 the composition is skewed to polar residues; the sequence is ATTTPHHIPSSSKS. A PAZ domain is found at 352-462; it reads PVIDFVAQLL…LPMEVCKIVE (111 aa). The region spanning 638–959 is the Piwi domain; the sequence is LLIGILPDNN…AAFRARFYME (322 aa). Residues 963 to 982 are compositionally biased toward low complexity; sequence SDSSSVVSGPGVRGPLSGSS. The tract at residues 963 to 994 is disordered; that stretch reads SDSSSVVSGPGVRGPLSGSSTSRTRAPGGAAV.

It belongs to the argonaute family. Ago subfamily.

In terms of biological role, probably involved in the RNA silencing pathway. May bind to short RNAs such as microRNAs (miRNAs) or short interfering RNAs (siRNAs), and represses the translation of mRNAs which are complementary to them. This Oryza sativa subsp. japonica (Rice) protein is Protein argonaute 1C (AGO1C).